Consider the following 312-residue polypeptide: Cytochrome c biogenesis protein CcsA (312 aa).

8 consecutive transmembrane segments (helical) span residues 12-32 (NLVFGILLFAMTIYWISLSFF), 47-67 (IVANILLFFILGSRWIVAGYF), 72-92 (LYESLLFLTWTLLTIYLYVEF), 98-118 (LVGAILIPVALLINGFANLTL), 144-164 (MMLSYGTLIMGSLLCILFLVI), 220-240 (IIGLGFPFLTIGIIAGGVWAN), 254-271 (TWALITWIVFATYLHSRI), and 281-301 (AILGGLGFFVIWICYLGVNFL).

It belongs to the CcmF/CycK/Ccl1/NrfE/CcsA family. May interact with Ccs1.

It is found in the plastid. The protein resides in the chloroplast thylakoid membrane. Functionally, required during biogenesis of c-type cytochromes (cytochrome c6 and cytochrome f) at the step of heme attachment. The polypeptide is Cytochrome c biogenesis protein CcsA (Trieres chinensis (Marine centric diatom)).